We begin with the raw amino-acid sequence, 95 residues long: Signal recognition particle 19 kDa protein (95 aa).

It belongs to the SRP19 family. In terms of assembly, part of the signal recognition particle protein translocation system, which is composed of SRP and FtsY. Archaeal SRP consists of a 7S RNA molecule of 300 nucleotides and two protein subunits: SRP54 and SRP19.

It localises to the cytoplasm. Involved in targeting and insertion of nascent membrane proteins into the cytoplasmic membrane. Binds directly to 7S RNA and mediates binding of the 54 kDa subunit of the SRP. The chain is Signal recognition particle 19 kDa protein from Desulfurococcus amylolyticus (strain DSM 18924 / JCM 16383 / VKM B-2413 / 1221n) (Desulfurococcus kamchatkensis).